The following is a 749-amino-acid chain: 5-methyltetrahydropteroyltriglutamate--homocysteine methyltransferase (749 aa).

Residues 15-18 (RELK) and lysine 114 each bind 5-methyltetrahydropteroyltri-L-glutamate. L-homocysteine-binding positions include 425-427 (IGS) and glutamate 478. Residues 425–427 (IGS) and glutamate 478 each bind L-methionine. 5-methyltetrahydropteroyltri-L-glutamate is bound at residue tryptophan 555. L-homocysteine is bound at residue aspartate 593. Aspartate 593 serves as a coordination point for L-methionine. Glutamate 599 provides a ligand contact to 5-methyltetrahydropteroyltri-L-glutamate. Residues histidine 636, cysteine 638, and glutamate 660 each contribute to the Zn(2+) site. Catalysis depends on histidine 689, which acts as the Proton donor. Cysteine 721 provides a ligand contact to Zn(2+).

This sequence belongs to the vitamin-B12 independent methionine synthase family. Zn(2+) serves as cofactor.

It carries out the reaction 5-methyltetrahydropteroyltri-L-glutamate + L-homocysteine = tetrahydropteroyltri-L-glutamate + L-methionine. Its pathway is amino-acid biosynthesis; L-methionine biosynthesis via de novo pathway; L-methionine from L-homocysteine (MetE route): step 1/1. Catalyzes the transfer of a methyl group from 5-methyltetrahydrofolate to homocysteine resulting in methionine formation. The polypeptide is 5-methyltetrahydropteroyltriglutamate--homocysteine methyltransferase (Streptococcus thermophilus (strain ATCC BAA-491 / LMD-9)).